The chain runs to 422 residues: Zinc finger protein Gfi-1 (422 aa).

Residues 1–20 (MPRSFLVKSKKAHSYHQPRS) form an SNAG domain region. The disordered stretch occupies residues 1-107 (MPRSFLVKSK…SPASEKSVCP (107 aa)). Ser20 carries the post-translational modification Phosphoserine. A compositionally biased stretch (low complexity) spans 34–47 (APGGADGTSSAGGA). Position 56 is a phosphoserine (Ser56). Polar residues predominate over residues 57-72 (PESQLTEAPDRSSASP). The required for interaction with RELA stretch occupies residues 140 to 257 (RPCAALDRGA…LLLGGGSYKC (118 aa)). 6 consecutive C2H2-type zinc fingers follow at residues 255-278 (YKCI…RRSH), 284-306 (FACE…KAVH), 312-334 (FDCK…LLIH), 340-362 (YPCQ…TFIH), 368-390 (HKCQ…SRKH), and 396-419 (FGCD…ETQH).

In terms of assembly, interacts with U2AF1L4. Component of RCOR-GFI-KDM1A-HDAC complexes. Interacts directly with RCOR1, KDM1A and HDAC2. Also interacts with HDAC1 and HDAC3. Interacts (via the zinc-finger domain) with ARIH2; the interaction prevents GFI1 ubiquitination and proteasomal degradation. Interacts with PIAS3; the interaction relieves the inhibitory effect of PIAS3 on STAT3-mediated transcriptional activity. Forms a complex with EHMT2 and HDAC1 to promote 'Lys-9' dimethylation of H3 (H3K9Me2) and repress expression of target genes. Interacts directly with EHMT2. Component of the GFI1-AJUBA-HDAC1 repressor complex. Interacts directly with AJUBA (via ITS LIM domains); the interaction results in the HDAC-dependent corepression of a subset of GFI1 target genes and, occurs independently of the SNAG domain. Interacts with SPI1; the interaction inhibits SPI1 transcriptional activity targeted at macrophage-specific genes, repressing macrophage differentiation of myeloid progenitor cells and promoting granulocyte commitment. Interacts with RUNX1T1; the interaction represses HDAC-mediated transcriptional activity. Interacts with RELA; the interaction occurs on liposaccharide (LPS) stimulation and controls RELA DNA binding activity and regulates endotoxin-mediated TOLL-like receptor inflammatory response. Interacts (via the C-terminal zinc fingers) with ZBTB17; the interaction results in the recruitment of GFI1 to the CDKN1A/p21 and CDKNIB promoters and repression of transcription. Ubiquitinated.

It localises to the nucleus. Its function is as follows. Transcription repressor essential for hematopoiesis. Functions in a cell-context and development-specific manner. Binds to 5'-TAAATCAC[AT]GCA-3' in the promoter region of a large number of genes. Component of several complexes, including the EHMT2-GFI1-HDAC1, AJUBA-GFI1-HDAC1 and RCOR-GFI-KDM1A-HDAC complexes, that suppress, via histone deacetylase (HDAC) recruitment, a number of genes implicated in multilineage blood cell development. Regulates neutrophil differentiation, promotes proliferation of lymphoid cells, and is required for granulocyte development. Inhibits SPI1 transcriptional activity at macrophage-specific genes, repressing macrophage differentiation of myeloid progenitor cells and promoting granulocyte commitment. Mediates, together with U2AF1L4, the alternative splicing of CD45 and controls T-cell receptor signaling. Regulates the endotoxin-mediated Toll-like receptor (TLR) inflammatory response by antagonizing RELA. Cooperates with CBFA2T2 to regulate ITGB1-dependent neurite growth. Controls cell-cycle progression by repressing CDKNIA/p21 transcription in response to TGFB1 via recruitment of GFI1 by ZBTB17 to the CDKNIA/p21 and CDKNIB promoters. Required for the maintenance of inner ear hair cells. In addition to its role in transcription, acts as a substrate adapter for PRMT1 in the DNA damage response: facilitates the recognition of TP53BP1 and MRE11 substrates by PRMT1, promoting their methylation and the DNA damage response. This chain is Zinc finger protein Gfi-1 (GFI1), found in Canis lupus familiaris (Dog).